Reading from the N-terminus, the 166-residue chain is Ribosome-binding factor A (166 aa).

The interval 122 to 166 is disordered; sequence LASTAEHAGDADPYRVDTEDDDDDTDGADAEARSDADVRRGPQSG. Basic and acidic residues predominate over residues 128-138; the sequence is HAGDADPYRVD. Residues 139–150 show a composition bias toward acidic residues; sequence TEDDDDDTDGAD. Positions 151-166 are enriched in basic and acidic residues; the sequence is AEARSDADVRRGPQSG.

The protein belongs to the RbfA family. As to quaternary structure, monomer. Binds 30S ribosomal subunits, but not 50S ribosomal subunits or 70S ribosomes.

It is found in the cytoplasm. One of several proteins that assist in the late maturation steps of the functional core of the 30S ribosomal subunit. Associates with free 30S ribosomal subunits (but not with 30S subunits that are part of 70S ribosomes or polysomes). Required for efficient processing of 16S rRNA. May interact with the 5'-terminal helix region of 16S rRNA. This chain is Ribosome-binding factor A, found in Saccharopolyspora erythraea (strain ATCC 11635 / DSM 40517 / JCM 4748 / NBRC 13426 / NCIMB 8594 / NRRL 2338).